The sequence spans 497 residues: Glycerol kinase (497 aa).

An ADP-binding site is contributed by Thr-13. The ATP site is built by Thr-13, Thr-14, and Ser-15. Thr-13 provides a ligand contact to sn-glycerol 3-phosphate. Arg-17 serves as a coordination point for ADP. Positions 83, 84, and 135 each coordinate sn-glycerol 3-phosphate. The glycerol site is built by Arg-83, Glu-84, and Tyr-135. His-231 carries the post-translational modification Phosphohistidine; by HPr. Asp-245 lines the sn-glycerol 3-phosphate pocket. Positions 245 and 246 each coordinate glycerol. The ADP site is built by Thr-267 and Gly-310. Residues Thr-267, Gly-310, Gln-314, and Gly-411 each contribute to the ATP site. The ADP site is built by Gly-411 and Asn-415.

This sequence belongs to the FGGY kinase family. As to quaternary structure, homotetramer and homodimer (in equilibrium). In terms of processing, the phosphoenolpyruvate-dependent sugar phosphotransferase system (PTS), including enzyme I, and histidine-containing protein (HPr) are required for the phosphorylation, which leads to the activation of the enzyme.

The catalysed reaction is glycerol + ATP = sn-glycerol 3-phosphate + ADP + H(+). Its pathway is polyol metabolism; glycerol degradation via glycerol kinase pathway; sn-glycerol 3-phosphate from glycerol: step 1/1. Activated by phosphorylation and inhibited by fructose 1,6-bisphosphate (FBP). Functionally, key enzyme in the regulation of glycerol uptake and metabolism. Catalyzes the phosphorylation of glycerol to yield sn-glycerol 3-phosphate. This Listeria welshimeri serovar 6b (strain ATCC 35897 / DSM 20650 / CCUG 15529 / CIP 8149 / NCTC 11857 / SLCC 5334 / V8) protein is Glycerol kinase.